A 901-amino-acid chain; its full sequence is Core protein VP3 (901 aa).

It belongs to the orbivirus VP3 family.

It localises to the virion. In terms of biological role, the VP3 protein is one of the five proteins (with VP1, VP4, VP6 and VP7) which form the inner capsid of the virus. The protein is Core protein VP3 (Segment-3) of Bluetongue virus 10 (isolate USA) (BTV 10).